The following is a 282-amino-acid chain: Bis(5'-nucleosyl)-tetraphosphatase, symmetrical (282 aa).

The protein belongs to the Ap4A hydrolase family.

It catalyses the reaction P(1),P(4)-bis(5'-adenosyl) tetraphosphate + H2O = 2 ADP + 2 H(+). Its function is as follows. Hydrolyzes diadenosine 5',5'''-P1,P4-tetraphosphate to yield ADP. The chain is Bis(5'-nucleosyl)-tetraphosphatase, symmetrical from Klebsiella pneumoniae subsp. pneumoniae (strain ATCC 700721 / MGH 78578).